A 436-amino-acid chain; its full sequence is tRNA modification GTPase MnmE (436 aa).

Residues Arg20, Glu77, and Lys117 each contribute to the (6S)-5-formyl-5,6,7,8-tetrahydrofolate site. The 147-residue stretch at 214–360 (GLKIVIAGAP…FIKELESFCL (147 aa)) folds into the TrmE-type G domain. GTP contacts are provided by residues 224-229 (NSGKSS), 243-249 (MEEAGTT), and 268-271 (DTAG). Positions 228 and 249 each coordinate Mg(2+). Residue Lys436 participates in (6S)-5-formyl-5,6,7,8-tetrahydrofolate binding.

It belongs to the TRAFAC class TrmE-Era-EngA-EngB-Septin-like GTPase superfamily. TrmE GTPase family. As to quaternary structure, homodimer. Heterotetramer of two MnmE and two MnmG subunits. The cofactor is K(+).

It localises to the cytoplasm. Exhibits a very high intrinsic GTPase hydrolysis rate. Involved in the addition of a carboxymethylaminomethyl (cmnm) group at the wobble position (U34) of certain tRNAs, forming tRNA-cmnm(5)s(2)U34. The sequence is that of tRNA modification GTPase MnmE from Bartonella quintana (strain Toulouse) (Rochalimaea quintana).